The chain runs to 219 residues: Ribose-5-phosphate isomerase A (219 aa).

Residues 28 to 31, 81 to 84, and 94 to 97 each bind substrate; these read TGST, DGAD, and KGGG. Glu103 functions as the Proton acceptor in the catalytic mechanism. Residue Lys121 coordinates substrate.

The protein belongs to the ribose 5-phosphate isomerase family. In terms of assembly, homodimer.

The enzyme catalyses aldehydo-D-ribose 5-phosphate = D-ribulose 5-phosphate. The protein operates within carbohydrate degradation; pentose phosphate pathway; D-ribose 5-phosphate from D-ribulose 5-phosphate (non-oxidative stage): step 1/1. Catalyzes the reversible conversion of ribose-5-phosphate to ribulose 5-phosphate. The polypeptide is Ribose-5-phosphate isomerase A (Nitrosomonas europaea (strain ATCC 19718 / CIP 103999 / KCTC 2705 / NBRC 14298)).